The following is a 226-amino-acid chain: ATP synthase F(0) complex subunit a (226 aa).

6 consecutive transmembrane segments (helical) span residues valine 13–tryptophan 33, tryptophan 69–leucine 89, threonine 97–alanine 117, isoleucine 138–valine 158, phenylalanine 179–leucine 199, and leucine 201–tyrosine 221.

It belongs to the ATPase A chain family. Component of the ATP synthase complex composed at least of ATP5F1A/subunit alpha, ATP5F1B/subunit beta, ATP5MC1/subunit c (homooctomer), MT-ATP6/subunit a, MT-ATP8/subunit 8, ATP5ME/subunit e, ATP5MF/subunit f, ATP5MG/subunit g, ATP5MK/subunit k, ATP5MJ/subunit j, ATP5F1C/subunit gamma, ATP5F1D/subunit delta, ATP5F1E/subunit epsilon, ATP5PF/subunit F6, ATP5PB/subunit b, ATP5PD/subunit d, ATP5PO/subunit OSCP. ATP synthase complex consists of a soluble F(1) head domain (subunits alpha(3) and beta(3)) - the catalytic core - and a membrane F(0) domain - the membrane proton channel (subunits c, a, 8, e, f, g, k and j). These two domains are linked by a central stalk (subunits gamma, delta, and epsilon) rotating inside the F1 region and a stationary peripheral stalk (subunits F6, b, d, and OSCP). Interacts with DNAJC30; interaction is direct.

It localises to the mitochondrion inner membrane. The catalysed reaction is H(+)(in) = H(+)(out). Functionally, subunit a, of the mitochondrial membrane ATP synthase complex (F(1)F(0) ATP synthase or Complex V) that produces ATP from ADP in the presence of a proton gradient across the membrane which is generated by electron transport complexes of the respiratory chain. ATP synthase complex consist of a soluble F(1) head domain - the catalytic core - and a membrane F(1) domain - the membrane proton channel. These two domains are linked by a central stalk rotating inside the F(1) region and a stationary peripheral stalk. During catalysis, ATP synthesis in the catalytic domain of F(1) is coupled via a rotary mechanism of the central stalk subunits to proton translocation. With the subunit c (ATP5MC1), forms the proton-conducting channel in the F(0) domain, that contains two crucial half-channels (inlet and outlet) that facilitate proton movement from the mitochondrial intermembrane space (IMS) into the matrix. Protons are taken up via the inlet half-channel and released through the outlet half-channel, following a Grotthuss mechanism. In Xenopus laevis (African clawed frog), this protein is ATP synthase F(0) complex subunit a.